The primary structure comprises 505 residues: MYRKSTLAMLIALLTSAASAHAQTDISTIEARLNALEKRLQEAENRAQTAENRAGAAEKKVQQLTAQQQKNQNSTQEVAQRTARLEKKADDKSGFEFHGYARSGVIMNDSGASTKSGAYITPAGETGGAIGRLGNQADTYVEMNLEHKQTLDNGATTRFKVMVADGQTSYNDWTASTSDLNVRQAFVELGNLPTFAGPFKGSTLWAGKRFDRDNFDIHWIDSDVVFLAGTGGGIYDVKWNDGLRSNFSLYGRNFGDIDDSSNSVQNYILTMNHFAGPLQMMVSGLRAKDNDERKDSNGNLAKGDAANTGVHALLGLHNDSFYGLRDGSSKTALLYGHGLGAEVKGIGSDGALRPGADTWRIASYGTTPLSENWSVAPAMLAQRSKDRYADGDSYQWATFNLRLIQAINQNFALAYEGSYQYMDLKPEGYNDRQAVNGSFYKLTFAPTFKVGSIGDFFSRPEIRFYTSWMDWSKKLNNYASDDALGSDGFNSGGEWSFGVQMETWF.

The first 22 residues, 1–22 (MYRKSTLAMLIALLTSAASAHA), serve as a signal peptide directing secretion. The segment at 44–87 (ENRAQTAENRAGAAEKKVQQLTAQQQKNQNSTQEVAQRTARLEK) is disordered. The span at 62–72 (QQLTAQQQKNQ) shows a compositional bias: low complexity.

Belongs to the porin LamB (TC 1.B.3) family. As to quaternary structure, homotrimer.

The protein resides in the cell outer membrane. Functionally, porin for sucrose uptake. This is Sucrose porin (scrY) from Salmonella typhimurium.